A 117-amino-acid polypeptide reads, in one-letter code: Small ribosomal subunit protein bS6 (117 aa).

The interval 96 to 117 is disordered; that stretch reads KEAAAPAPKAAPVESAPAVEAE. A compositionally biased stretch (low complexity) spans 99 to 117; the sequence is AAPAPKAAPVESAPAVEAE.

Belongs to the bacterial ribosomal protein bS6 family.

In terms of biological role, binds together with bS18 to 16S ribosomal RNA. The polypeptide is Small ribosomal subunit protein bS6 (Geobacter sulfurreducens (strain ATCC 51573 / DSM 12127 / PCA)).